A 518-amino-acid polypeptide reads, in one-letter code: Ankyrin repeat and SOCS box protein 3 (518 aa).

ANK repeat units lie at residues 9-38 (DTCSTVGLAAREGNVKVLRKLLKKGRSVDV), 42-71 (RGWMPIHEAAYHNSVECLQMLINADSSENY), 78-107 (EGFCALHLAASQGHWKIVQILLEAGADPNA), 111-140 (EETTPLFLAVENGQIDVLRLLLQHGANVNG), 145-174 (CGWNSLHQASFQENAEIIKLLLRKGANKEC), 178-207 (FGITPLFVAAQYGKLESLSILISSGANVNC), 211-240 (DKATPLFIAAQEGHTKCVELLLSSGADPDL), 246-275 (SWQLPIHAAAQMGHTKILDLLIPLTNRACD), 279-308 (NKVSPVYSAVFGGHEDCLEILLRNGYSPDA), 315-346 (GFSSPVCMAFQKDCEFFGIVNILLKYGAQINE), and 348-373 (HLAYCLKYEKFSIFRYFLRKGCSLGP). The region spanning 441 to 504 (MLSARASNAW…HNYLLYEDVL (64 aa)) is the SOCS box domain.

Belongs to the ankyrin SOCS box (ASB) family. As to quaternary structure, interacts with ELOB and TNFRSF1B.

The protein resides in the cytoplasm. It participates in protein modification; protein ubiquitination. In terms of biological role, probable substrate-recognition component of a SCF-like ECS (Elongin-Cullin-SOCS-box protein) E3 ubiquitin-protein ligase complex which mediates the ubiquitination and subsequent proteasomal degradation of target proteins. Recognizes TNFRSF1B. Plays a role in the down-regulation of antiviral innate immunity by targeting MAVS for ubiquitin-proteasomal degradation. Also destabilizes TRAF6 by enhancing its 'Lys-48'-linked polyubiquitination. The protein is Ankyrin repeat and SOCS box protein 3 (ASB3) of Homo sapiens (Human).